Here is a 173-residue protein sequence, read N- to C-terminus: Ribosome maturation factor RimM (173 aa).

The 72-residue stretch at 102–173 (EGEYYWSDLI…TMLVDWDPEF (72 aa)) folds into the PRC barrel domain.

The protein belongs to the RimM family. As to quaternary structure, binds ribosomal protein uS19.

The protein resides in the cytoplasm. Functionally, an accessory protein needed during the final step in the assembly of 30S ribosomal subunit, possibly for assembly of the head region. Essential for efficient processing of 16S rRNA. May be needed both before and after RbfA during the maturation of 16S rRNA. It has affinity for free ribosomal 30S subunits but not for 70S ribosomes. This chain is Ribosome maturation factor RimM, found in Methylobacillus flagellatus (strain ATCC 51484 / DSM 6875 / VKM B-1610 / KT).